Consider the following 512-residue polypeptide: Cytochrome P450 1A1 (512 aa).

Residues 29-40 (SRPRVPKGLKNP) form a mitochondrial targeting signal region. An O-linked (GlcNAc) serine glycan is attached at Ser-67. Phe-224 provides a ligand contact to substrate. Cys-457 provides a ligand contact to heme.

Belongs to the cytochrome P450 family. Interacts with cytosolic chaperones HSP70 and HSP90; this interaction is required for initial targeting to mitochondria. Interacts (via mitochondrial targeting signal) with TOMM40 (via N-terminus); this interaction is required for translocation across the mitochondrial outer membrane. The cofactor is heme.

Its subcellular location is the endoplasmic reticulum membrane. The protein localises to the mitochondrion inner membrane. The protein resides in the microsome membrane. It is found in the cytoplasm. It catalyses the reaction an organic molecule + reduced [NADPH--hemoprotein reductase] + O2 = an alcohol + oxidized [NADPH--hemoprotein reductase] + H2O + H(+). The catalysed reaction is estrone + reduced [NADPH--hemoprotein reductase] + O2 = 2-hydroxyestrone + oxidized [NADPH--hemoprotein reductase] + H2O + H(+). It carries out the reaction estrone + reduced [NADPH--hemoprotein reductase] + O2 = 4-hydroxyestrone + oxidized [NADPH--hemoprotein reductase] + H2O + H(+). The enzyme catalyses estrone + reduced [NADPH--hemoprotein reductase] + O2 = 6alpha-hydroxyestrone + oxidized [NADPH--hemoprotein reductase] + H2O + H(+). It catalyses the reaction estrone + reduced [NADPH--hemoprotein reductase] + O2 = 15alpha-hydroxyestrone + oxidized [NADPH--hemoprotein reductase] + H2O + H(+). The catalysed reaction is estrone + reduced [NADPH--hemoprotein reductase] + O2 = 16alpha-hydroxyestrone + oxidized [NADPH--hemoprotein reductase] + H2O + H(+). It carries out the reaction 17beta-estradiol + reduced [NADPH--hemoprotein reductase] + O2 = 2-hydroxy-17beta-estradiol + oxidized [NADPH--hemoprotein reductase] + H2O + H(+). The enzyme catalyses 17beta-estradiol + reduced [NADPH--hemoprotein reductase] + O2 = 4-hydroxy-17beta-estradiol + oxidized [NADPH--hemoprotein reductase] + H2O + H(+). It catalyses the reaction 17beta-estradiol + reduced [NADPH--hemoprotein reductase] + O2 = 6alpha-hydroxy-17beta-estradiol + oxidized [NADPH--hemoprotein reductase] + H2O + H(+). The catalysed reaction is 17beta-estradiol + reduced [NADPH--hemoprotein reductase] + O2 = 7alpha-hydroxy-17beta-estradiol + oxidized [NADPH--hemoprotein reductase] + H2O + H(+). It carries out the reaction 17beta-estradiol + reduced [NADPH--hemoprotein reductase] + O2 = 15alpha-hydroxy-17beta-estradiol + oxidized [NADPH--hemoprotein reductase] + H2O + H(+). The enzyme catalyses (5Z,8Z,11Z)-eicosatrienoate + reduced [NADPH--hemoprotein reductase] + O2 = 19-hydroxy-(5Z,8Z,11Z)-eicosatrienoate + oxidized [NADPH--hemoprotein reductase] + H2O + H(+). It catalyses the reaction (5Z,8Z,11Z,14Z)-eicosatetraenoate + reduced [NADPH--hemoprotein reductase] + O2 = 16-hydroxy-(5Z,8Z,11Z,14Z)-eicosatetraenoate + oxidized [NADPH--hemoprotein reductase] + H2O + H(+). The catalysed reaction is (5Z,8Z,11Z,14Z)-eicosatetraenoate + reduced [NADPH--hemoprotein reductase] + O2 = 17-hydroxy-(5Z,8Z,11Z,14Z)-eicosatetraenoate + oxidized [NADPH--hemoprotein reductase] + H2O + H(+). It carries out the reaction (5Z,8Z,11Z,14Z)-eicosatetraenoate + reduced [NADPH--hemoprotein reductase] + O2 = 18-hydroxy-(5Z,8Z,11Z,14Z)-eicosatetraenoate + oxidized [NADPH--hemoprotein reductase] + H2O + H(+). The enzyme catalyses (5Z,8Z,11Z,14Z)-eicosatetraenoate + reduced [NADPH--hemoprotein reductase] + O2 = 19-hydroxy-(5Z,8Z,11Z,14Z)-eicosatetraenoate + oxidized [NADPH--hemoprotein reductase] + H2O + H(+). It catalyses the reaction (5Z,8Z,11Z,14Z,17Z)-eicosapentaenoate + reduced [NADPH--hemoprotein reductase] + O2 = 19-hydroxy-(5Z,8Z,11Z,14Z,17Z)-eicosapentaenoate + oxidized [NADPH--hemoprotein reductase] + H2O + H(+). The catalysed reaction is (5Z,8Z,11Z,14Z)-eicosatetraenoate + reduced [NADPH--hemoprotein reductase] + O2 = (8R,9S)-epoxy-(5Z,11Z,14Z)-eicosatrienoate + oxidized [NADPH--hemoprotein reductase] + H2O + H(+). It carries out the reaction (5Z,8Z,11Z,14Z)-eicosatetraenoate + reduced [NADPH--hemoprotein reductase] + O2 = (11R,12S)-epoxy-(5Z,8Z,14Z)-eicosatrienoate + oxidized [NADPH--hemoprotein reductase] + H2O + H(+). The enzyme catalyses (5Z,8Z,11Z,14Z)-eicosatetraenoate + reduced [NADPH--hemoprotein reductase] + O2 = (14S,15R)-epoxy-(5Z,8Z,11Z)-eicosatrienoate + oxidized [NADPH--hemoprotein reductase] + H2O + H(+). It catalyses the reaction (5Z,8Z,11Z,14Z)-eicosatetraenoate + reduced [NADPH--hemoprotein reductase] + O2 = (14R,15S)-epoxy-(5Z,8Z,11Z)-eicosatrienoate + oxidized [NADPH--hemoprotein reductase] + H2O + H(+). The catalysed reaction is (5Z,8Z,11Z,14Z,17Z)-eicosapentaenoate + reduced [NADPH--hemoprotein reductase] + O2 = (17R,18S)-epoxy-(5Z,8Z,11Z,14Z)-eicosatetraenoate + oxidized [NADPH--hemoprotein reductase] + H2O + H(+). It carries out the reaction (4Z,7Z,10Z,13Z,16Z,19Z)-docosahexaenoate + reduced [NADPH--hemoprotein reductase] + O2 = (19S,20R)-epoxy-(4Z,7Z,10Z,13Z,16Z)-docosapentaenoate + oxidized [NADPH--hemoprotein reductase] + H2O + H(+). The enzyme catalyses (4Z,7Z,10Z,13Z,16Z,19Z)-docosahexaenoate + reduced [NADPH--hemoprotein reductase] + O2 = (19R,20S)-epoxy-(4Z,7Z,10Z,13Z,16Z)-docosapentaenoate + oxidized [NADPH--hemoprotein reductase] + H2O + H(+). It catalyses the reaction all-trans-retinol + reduced [NADPH--hemoprotein reductase] + O2 = all-trans-retinal + oxidized [NADPH--hemoprotein reductase] + 2 H2O + H(+). The catalysed reaction is all-trans-retinal + reduced [NADPH--hemoprotein reductase] + O2 = all-trans-retinoate + oxidized [NADPH--hemoprotein reductase] + H2O + 2 H(+). It carries out the reaction (13S)-hydroperoxy-(9Z,11E)-octadecadienoate = 13-oxo-(9Z,11E)-octadecadienoate + H2O. The enzyme catalyses (12S)-hydroperoxy-(5Z,8Z,10E,14Z)-eicosatetraenoate = 12-oxo-(5Z,8Z,10E,14Z)-eicosatetraenoate + H2O. It catalyses the reaction (15S)-hydroperoxy-(5Z,8Z,11Z,13E)-eicosatetraenoate = 15-oxo-(5Z,8Z,11Z,13E)-eicosatetraenoate + H2O. The catalysed reaction is (5S)-hydroperoxy-(6E,8Z,11Z,14Z)-eicosatetraenoate = 5-oxo-(6E,8Z,11Z,14Z)-eicosatetraenoate + H2O. Its pathway is steroid hormone biosynthesis. The protein operates within lipid metabolism; fatty acid metabolism. It functions in the pathway cofactor metabolism; retinol metabolism. Its function is as follows. A cytochrome P450 monooxygenase involved in the metabolism of various endogenous substrates, including fatty acids, steroid hormones and vitamins. Mechanistically, uses molecular oxygen inserting one oxygen atom into a substrate, and reducing the second into a water molecule, with two electrons provided by NADPH via cytochrome P450 reductase (CPR; NADPH-ferrihemoprotein reductase). Catalyzes the hydroxylation of carbon-hydrogen bonds. Exhibits high catalytic activity for the formation of hydroxyestrogens from estrone (E1) and 17beta-estradiol (E2), namely 2-hydroxy E1 and E2, as well as D-ring hydroxylated E1 and E2 at the C15alpha and C16alpha positions. Displays different regioselectivities for polyunsaturated fatty acids (PUFA) hydroxylation. Catalyzes the epoxidation of double bonds of certain PUFA. Converts arachidonic acid toward epoxyeicosatrienoic acid (EET) regioisomers, 8,9-, 11,12-, and 14,15-EET, that function as lipid mediators in the vascular system. Displays an absolute stereoselectivity in the epoxidation of eicosapentaenoic acid (EPA) producing the 17(R),18(S) enantiomer. May play an important role in all-trans retinoic acid biosynthesis in extrahepatic tissues. Catalyzes two successive oxidative transformation of all-trans retinol to all-trans retinal and then to the active form all-trans retinoic acid. May also participate in eicosanoids metabolism by converting hydroperoxide species into oxo metabolites (lipoxygenase-like reaction, NADPH-independent). In Macaca mulatta (Rhesus macaque), this protein is Cytochrome P450 1A1 (CYP1A1).